The chain runs to 648 residues: DNA gyrase subunit B (648 aa).

A Toprim domain is found at 427–541 (TELFIVEGDS…AGYVYIAQPP (115 aa)). The Mg(2+) site is built by Glu-433, Asp-506, and Asp-508.

The protein belongs to the type II topoisomerase GyrB family. Heterotetramer, composed of two GyrA and two GyrB chains. In the heterotetramer, GyrA contains the active site tyrosine that forms a transient covalent intermediate with DNA, while GyrB binds cofactors and catalyzes ATP hydrolysis. The cofactor is Mg(2+). Mn(2+) serves as cofactor. It depends on Ca(2+) as a cofactor.

The protein resides in the cytoplasm. It carries out the reaction ATP-dependent breakage, passage and rejoining of double-stranded DNA.. Functionally, a type II topoisomerase that negatively supercoils closed circular double-stranded (ds) DNA in an ATP-dependent manner to modulate DNA topology and maintain chromosomes in an underwound state. Negative supercoiling favors strand separation, and DNA replication, transcription, recombination and repair, all of which involve strand separation. Also able to catalyze the interconversion of other topological isomers of dsDNA rings, including catenanes and knotted rings. Type II topoisomerases break and join 2 DNA strands simultaneously in an ATP-dependent manner. In Streptococcus pneumoniae serotype 4 (strain ATCC BAA-334 / TIGR4), this protein is DNA gyrase subunit B.